We begin with the raw amino-acid sequence, 158 residues long: MRRKLRIALVAHDNRKADIVDWALNNAEMLSQHRLFGTGTTGTLVRESFMKRGIASDITCMHSGPMGGDAEIAALVVRKEIDFAVFFIDDLNPQPHEADIQMLLRQCRIHNIPIACNRYSADLMITSSLWDDAGYVPKDPIYAPFDRKAFEESLKVKE.

The MGS-like domain occupies 1–158 (MRRKLRIALV…AFEESLKVKE (158 aa)). Substrate-binding positions include histidine 12, lysine 16, 38-41 (TGTT), and 63-64 (SG). Aspartate 69 functions as the Proton donor/acceptor in the catalytic mechanism. Histidine 96 contacts substrate.

The protein belongs to the methylglyoxal synthase family.

The enzyme catalyses dihydroxyacetone phosphate = methylglyoxal + phosphate. In terms of biological role, catalyzes the formation of methylglyoxal from dihydroxyacetone phosphate. The polypeptide is Methylglyoxal synthase (Treponema socranskii).